Here is a 130-residue protein sequence, read N- to C-terminus: Glycoprotein hormone beta-5 (130 aa).

Residues 1–24 (MKLAFLFLGPMALLLLAGYGCVLG) form the signal peptide. Cystine bridges form between cysteine 36-cysteine 84, cysteine 50-cysteine 99, cysteine 60-cysteine 115, cysteine 64-cysteine 117, and cysteine 120-cysteine 127. Asparagine 87 is a glycosylation site (N-linked (GlcNAc...) asparagine).

This sequence belongs to the glycoprotein hormones subunit beta family. As to quaternary structure, heterodimer with GPHA2; this heterodimer interacts with thyroid-stimulating hormone receptor (TSHR), and hence stimulates cAMP production. N-glycosylated. In terms of tissue distribution, highly expressed in brain and at low levels in pituitary. Also found in retina, testis and skin but not in pancreas, parotid, kidney, stomach, liver, colon, small intestine, thyroid, brain or adrenal gland. In pituitary, colocalizes with ACTH, suggesting that it is located in corticotrophs.

The protein resides in the secreted. Functionally, functions as a heterodimeric glycoprotein hormone with GPHA2 able to bind and activate the thyroid-stimulating hormone receptor (TSHR), leading to increased cAMP production. Plays a central role in controlling thyroid cell metabolism. In Homo sapiens (Human), this protein is Glycoprotein hormone beta-5 (GPHB5).